A 558-amino-acid polypeptide reads, in one-letter code: Undecaprenyl phosphate-alpha-4-amino-4-deoxy-L-arabinose arabinosyl transferase 1 (558 aa).

Transmembrane regions (helical) follow at residues 4-24, 87-107, 115-135, 136-156, 178-198, 207-227, 257-277, 295-315, 316-336, 355-375, 383-403, and 411-431; these read GAGLWLGLLAVFFVLTYLVPL, FASVFSTGLSALLVFTVSWTV, LLAALIFLSLLLVFGVGTYSV, LDPMIALWLNAAMAAHVFALR, FMTKGFLALVVPAIAVLPVAL, LGYGALAALLAVLVNLPWALA, APFWFYLPVLALGSLPWLGLL, FLLLCWVVMPLLFFSVAKGKL, LTYILPCMAPLALLLAAYGRE, AFALCAIVALLLAGSGLLPWA, WPRIVIGTLVFAGWLCFAAVS, and WALAAFCPLLLSLLVGQIIPQ.

Belongs to the glycosyltransferase 83 family.

Its subcellular location is the cell inner membrane. It catalyses the reaction 4-amino-4-deoxy-alpha-L-arabinopyranosyl di-trans,octa-cis-undecaprenyl phosphate + lipid IVA = lipid IIA + di-trans,octa-cis-undecaprenyl phosphate.. The protein operates within lipopolysaccharide metabolism; 4-amino-4-deoxy-beta-L-arabinose-lipid A biosynthesis. Its function is as follows. Catalyzes the transfer of the L-Ara4N moiety of the glycolipid undecaprenyl phosphate-alpha-L-Ara4N to lipid A. The modified arabinose is attached to lipid A and is required for resistance to polymyxin and cationic antimicrobial peptides. This is Undecaprenyl phosphate-alpha-4-amino-4-deoxy-L-arabinose arabinosyl transferase 1 from Sodalis glossinidius (strain morsitans).